The primary structure comprises 344 residues: uncharacterized protein (344 aa).

Positions 95–344 (TINPEDANED…TPAKKNSKGR (250 aa)) are disordered. Residues 103 to 123 (EDAKVKNSLKLEKEEGSDEKS) are compositionally biased toward basic and acidic residues. A compositionally biased stretch (acidic residues) spans 135–155 (SDDESDNSNDSEESEAEDSDQ). The segment covering 191–200 (SAKNAKASKP) has biased composition (low complexity). Over residues 244–259 (SEDEDSGSDNSEEESE) the composition is skewed to acidic residues. Over residues 265-276 (ASSKKPPSKSSK) the composition is skewed to basic residues. A compositionally biased stretch (acidic residues) spans 281–314 (EDEDEDSGQSESEHSEEESNSDEDSGQSEEESEE). Residues 331-344 (TAKKTPAKKNSKGR) show a composition bias toward basic residues.

This is an uncharacterized protein from Acanthamoeba polyphaga (Amoeba).